Here is a 464-residue protein sequence, read N- to C-terminus: Bifunctional protein GlmU (464 aa).

The tract at residues 1-231 (MDVVIMAAGK…ATQVAGVNSP (231 aa)) is pyrophosphorylase. Residues Lys20, Gln78, 83–84 (GT), 105–107 (SGD), Gly142, Glu156, and Asn229 each bind UDP-N-acetyl-alpha-D-glucosamine. Asp107 is a Mg(2+) binding site. Asn229 provides a ligand contact to Mg(2+). The tract at residues 232–252 (VQLAALERAFQSKVALQLMEQ) is linker. The segment at 253 to 464 (GVRLADPARL…SIANWKRPSK (212 aa)) is N-acetyltransferase. 2 residues coordinate UDP-N-acetyl-alpha-D-glucosamine: Arg343 and Lys361. Residue His373 is the Proton acceptor of the active site. 2 residues coordinate UDP-N-acetyl-alpha-D-glucosamine: Tyr376 and Asn387. Acetyl-CoA is bound by residues Ala390, 396–397 (NY), Ser415, Gly433, and Arg450.

It in the N-terminal section; belongs to the N-acetylglucosamine-1-phosphate uridyltransferase family. In the C-terminal section; belongs to the transferase hexapeptide repeat family. As to quaternary structure, homotrimer. Mg(2+) serves as cofactor.

Its subcellular location is the cytoplasm. It catalyses the reaction alpha-D-glucosamine 1-phosphate + acetyl-CoA = N-acetyl-alpha-D-glucosamine 1-phosphate + CoA + H(+). The enzyme catalyses N-acetyl-alpha-D-glucosamine 1-phosphate + UTP + H(+) = UDP-N-acetyl-alpha-D-glucosamine + diphosphate. Its pathway is nucleotide-sugar biosynthesis; UDP-N-acetyl-alpha-D-glucosamine biosynthesis; N-acetyl-alpha-D-glucosamine 1-phosphate from alpha-D-glucosamine 6-phosphate (route II): step 2/2. It participates in nucleotide-sugar biosynthesis; UDP-N-acetyl-alpha-D-glucosamine biosynthesis; UDP-N-acetyl-alpha-D-glucosamine from N-acetyl-alpha-D-glucosamine 1-phosphate: step 1/1. The protein operates within bacterial outer membrane biogenesis; LPS lipid A biosynthesis. Catalyzes the last two sequential reactions in the de novo biosynthetic pathway for UDP-N-acetylglucosamine (UDP-GlcNAc). The C-terminal domain catalyzes the transfer of acetyl group from acetyl coenzyme A to glucosamine-1-phosphate (GlcN-1-P) to produce N-acetylglucosamine-1-phosphate (GlcNAc-1-P), which is converted into UDP-GlcNAc by the transfer of uridine 5-monophosphate (from uridine 5-triphosphate), a reaction catalyzed by the N-terminal domain. The polypeptide is Bifunctional protein GlmU (Albidiferax ferrireducens (strain ATCC BAA-621 / DSM 15236 / T118) (Rhodoferax ferrireducens)).